The sequence spans 430 residues: Tol-Pal system protein TolB (430 aa).

The N-terminal stretch at 1-26 (MSLMTKLGLRALVASCLIAAGGAAHA) is a signal peptide.

It belongs to the TolB family. In terms of assembly, the Tol-Pal system is composed of five core proteins: the inner membrane proteins TolA, TolQ and TolR, the periplasmic protein TolB and the outer membrane protein Pal. They form a network linking the inner and outer membranes and the peptidoglycan layer.

The protein localises to the periplasm. Part of the Tol-Pal system, which plays a role in outer membrane invagination during cell division and is important for maintaining outer membrane integrity. The polypeptide is Tol-Pal system protein TolB (Paraburkholderia phymatum (strain DSM 17167 / CIP 108236 / LMG 21445 / STM815) (Burkholderia phymatum)).